The chain runs to 164 residues: MNREPMSMHGYNKICAELKQLKEVERPNIVKEIDIARGHGDLKENAEYHAAKEKQRFIEARIVDLSEIISNAQVIDPGALMHNKVSFGSTIKILNLDNDKEFSYTIVGSVESDPAKGLISFGSPIAKSLIGKSKGDVASIQLPNGESDFEILDIYYKEICFDEN.

It belongs to the GreA/GreB family.

Its function is as follows. Necessary for efficient RNA polymerase transcription elongation past template-encoded arresting sites. The arresting sites in DNA have the property of trapping a certain fraction of elongating RNA polymerases that pass through, resulting in locked ternary complexes. Cleavage of the nascent transcript by cleavage factors such as GreA or GreB allows the resumption of elongation from the new 3'terminus. GreA releases sequences of 2 to 3 nucleotides. The chain is Transcription elongation factor GreA from Helicobacter acinonychis (strain Sheeba).